A 162-amino-acid polypeptide reads, in one-letter code: ATP synthase subunit b (162 aa).

The chain crosses the membrane as a helical span at residues Thr-6–Trp-25.

The protein belongs to the ATPase B chain family. As to quaternary structure, F-type ATPases have 2 components, F(1) - the catalytic core - and F(0) - the membrane proton channel. F(1) has five subunits: alpha(3), beta(3), gamma(1), delta(1), epsilon(1). F(0) has three main subunits: a(1), b(2) and c(10-14). The alpha and beta chains form an alternating ring which encloses part of the gamma chain. F(1) is attached to F(0) by a central stalk formed by the gamma and epsilon chains, while a peripheral stalk is formed by the delta and b chains.

The protein resides in the cell membrane. Its function is as follows. F(1)F(0) ATP synthase produces ATP from ADP in the presence of a proton or sodium gradient. F-type ATPases consist of two structural domains, F(1) containing the extramembraneous catalytic core and F(0) containing the membrane proton channel, linked together by a central stalk and a peripheral stalk. During catalysis, ATP synthesis in the catalytic domain of F(1) is coupled via a rotary mechanism of the central stalk subunits to proton translocation. In terms of biological role, component of the F(0) channel, it forms part of the peripheral stalk, linking F(1) to F(0). The sequence is that of ATP synthase subunit b from Lacticaseibacillus paracasei (strain ATCC 334 / BCRC 17002 / CCUG 31169 / CIP 107868 / KCTC 3260 / NRRL B-441) (Lactobacillus paracasei).